The following is a 435-amino-acid chain: MKKEGIEGTERFLSPGKGRGLKAIKHFKVGDLVFACPAYAYVLTVNERGGRCECCFTRKEGLSKCGKCKQAYYCNVECQRGDWPMHKLECSAMCAYGENWCPSETVRLVARIILKQKHQTERTPSERVLTLRELEAHLDKLDNEKNEMNDTDIAALHHFYSRHLDFPDNAALTELIAQVNCNGFTIEDEELSHLGSALFPDVALMNHSCSPNVIVTYKGTVAEVRAVQEINPEEEIFNSYIDLLYPTEDRIERLKDSYFFNCDCKECTSKSKDEAKMEIRQKLSIPPEEEEIKQMVIYARNVIEEFRRAKHYKTPSELLEICELSMEKMGAIFAETNVYMLHMMYQAMGVCLYMQDWDGAMKYGEKIIHPYSVHYPPYSLNVASMYLKLGRLYLGLEKRTQGVKALKKALAIMDIAHGKDHPYIDEIKKEMEEQT.

Positions 7–241 (EGTERFLSPG…PEEEIFNSYI (235 aa)) constitute an SET domain. 17-19 (KGR) contacts S-adenosyl-L-methionine. Zn(2+) is bound by residues cysteine 52, cysteine 55, cysteine 65, cysteine 68, cysteine 74, cysteine 78, histidine 86, and cysteine 90. Residues 52–90 (CECCFTRKEGLSKCGKCKQAYYCNVECQRGDWPMHKLEC) form an MYND-type zinc finger. S-adenosyl-L-methionine is bound by residues histidine 137, 206 to 207 (NH), and 258 to 260 (YFF).

Belongs to the class V-like SAM-binding methyltransferase superfamily.

It localises to the cytoplasm. Its subcellular location is the cytosol. The protein localises to the nucleus. The catalysed reaction is L-lysyl(4)-[histone H3] + 3 S-adenosyl-L-methionine = N(6),N(6),N(6)-trimethyl-L-lysyl(4)-[histone H3] + 3 S-adenosyl-L-homocysteine + 3 H(+). It carries out the reaction L-lysyl-[protein] + S-adenosyl-L-methionine = N(6)-methyl-L-lysyl-[protein] + S-adenosyl-L-homocysteine + H(+). Functionally, protein-lysine N-methyltransferase that methylates both histones and non-histone proteins, including p53/TP53 and RB1. Specifically trimethylates histone H3 'Lys-4' (H3K4me3) in vivo. The activity requires interaction with HSP90alpha. Shows even higher methyltransferase activity on p53/TP53. Monomethylates 'Lys-370' of p53/TP53, leading to decreased DNA-binding activity and subsequent transcriptional regulation activity of p53/TP53. Monomethylates RB1 at 'Lys-860'. This chain is N-lysine methyltransferase SMYD2-A (smyd2a), found in Danio rerio (Zebrafish).